The chain runs to 413 residues: uncharacterized protein (413 aa).

The Response regulatory domain maps to 2–129 (RILIVDDENT…KTTWKLRLME (128 aa)). Position 54 is a 4-aspartylphosphate (Asp54).

This is an uncharacterized protein from Sinorhizobium fredii (strain NBRC 101917 / NGR234).